We begin with the raw amino-acid sequence, 165 residues long: uncharacterized protein (165 aa).

2 consecutive transmembrane segments (helical) span residues 7 to 27 (LWLA…QITV) and 141 to 161 (KGTP…IALL).

The protein localises to the cell membrane. This is an uncharacterized protein from Archaeoglobus fulgidus (strain ATCC 49558 / DSM 4304 / JCM 9628 / NBRC 100126 / VC-16).